Here is a 349-residue protein sequence, read N- to C-terminus: Phosphoribosylformylglycinamidine cyclo-ligase (349 aa).

This sequence belongs to the AIR synthase family.

The protein resides in the cytoplasm. It catalyses the reaction 2-formamido-N(1)-(5-O-phospho-beta-D-ribosyl)acetamidine + ATP = 5-amino-1-(5-phospho-beta-D-ribosyl)imidazole + ADP + phosphate + H(+). Its pathway is purine metabolism; IMP biosynthesis via de novo pathway; 5-amino-1-(5-phospho-D-ribosyl)imidazole from N(2)-formyl-N(1)-(5-phospho-D-ribosyl)glycinamide: step 2/2. This Bordetella parapertussis (strain 12822 / ATCC BAA-587 / NCTC 13253) protein is Phosphoribosylformylglycinamidine cyclo-ligase.